Here is a 426-residue protein sequence, read N- to C-terminus: Pyruvate, phosphate dikinase regulatory protein, chloroplastic (426 aa).

The N-terminal 41 residues, 1–41 (MIGCAKPLAAPLQAWARPPSPAGRRLPPSFCAPDTSPALTR), are a transit peptide targeting the chloroplast. 2 disordered regions span residues 1–76 (MIGC…HLDR) and 94–124 (AALSSASVSAPPVIKSPRPEDAAVAAEDGED). The span at 94–119 (AALSSASVSAPPVIKSPRPEDAAVAA) shows a compositional bias: low complexity. Residue 153-160 (HSVNAALG) coordinates ADP.

The protein belongs to the pyruvate, phosphate/water dikinase regulatory protein family. PDRP subfamily. As to quaternary structure, homodimer at pH 7.5 and homotetramer at pH 8.3. The cofactor is Mg(2+). Leaf mesophyll-cells.

Its subcellular location is the plastid. It is found in the chloroplast stroma. It carries out the reaction N(tele)-phospho-L-histidyl/L-threonyl-[pyruvate, phosphate dikinase] + ADP = N(tele)-phospho-L-histidyl/O-phospho-L-threonyl-[pyruvate, phosphate dikinase] + AMP + H(+). The enzyme catalyses N(tele)-phospho-L-histidyl/O-phospho-L-threonyl-[pyruvate, phosphate dikinase] + phosphate + H(+) = N(tele)-phospho-L-histidyl/L-threonyl-[pyruvate, phosphate dikinase] + diphosphate. The protein operates within photosynthesis; C4 acid pathway. Its activity is regulated as follows. Regulated by light/dark exposure. In terms of biological role, bifunctional serine/threonine kinase and phosphorylase involved in the dark/light-mediated regulation of PPDK by catalyzing its phosphorylation/dephosphorylation. Dark/light-induced changes in stromal concentrations of the competing ADP and Pi substrates govern the direction of the reaction. In the dark, phosphorylates the catalytic intermediate of PPDK (PPDK-HisP), inactivating it. Light exposure induces the phosphorolysis reaction that reactivates PPDK. Phosphorylates PPDK at both Ser-528 and Thr-527. Can use ADP as a high specificity substrate and GDP as a lower affinity substrate, but has no activity with UDP. The chain is Pyruvate, phosphate dikinase regulatory protein, chloroplastic (PDRP1) from Zea mays (Maize).